The chain runs to 266 residues: MPYEDLVRKILTEGTLKSDRTGTGTISLFGQQMRFDLSKYFPLLTTKTVFFKGLAYELLWFLKGSSNINWLLEHNVHIWDEWADENGDLGPVYGVQWRSWPAPTPEDPNRTIDQISNVLDLIKHHPDSRRMIVSAWNPAEVEKMALPPCHALFQFYVADDKLSCQLYQRSCDMFLGVPFNIASYSLLTMMMAQQAGLKPGEFVWTGGDCHVYDNHVDQFLEQLGRKPYPYPTIEIRKADSLFDYQYEDFKVVGYQHHPTIKAPVAV.

Residues arginine 20 and 129–130 contribute to the dUMP site; that span reads RR. Catalysis depends on cysteine 149, which acts as the Nucleophile. DUMP-binding positions include 169–172, asparagine 180, and 210–212; these read RSCD and HVY. Aspartate 172 contacts (6R)-5,10-methylene-5,6,7,8-tetrahydrofolate. Alanine 265 is a binding site for (6R)-5,10-methylene-5,6,7,8-tetrahydrofolate.

Belongs to the thymidylate synthase family. Bacterial-type ThyA subfamily. As to quaternary structure, homodimer.

The protein resides in the cytoplasm. The catalysed reaction is dUMP + (6R)-5,10-methylene-5,6,7,8-tetrahydrofolate = 7,8-dihydrofolate + dTMP. It participates in pyrimidine metabolism; dTTP biosynthesis. Its function is as follows. Catalyzes the reductive methylation of 2'-deoxyuridine-5'-monophosphate (dUMP) to 2'-deoxythymidine-5'-monophosphate (dTMP) while utilizing 5,10-methylenetetrahydrofolate (mTHF) as the methyl donor and reductant in the reaction, yielding dihydrofolate (DHF) as a by-product. This enzymatic reaction provides an intracellular de novo source of dTMP, an essential precursor for DNA biosynthesis. The protein is Thymidylate synthase of Bifidobacterium longum (strain NCC 2705).